Consider the following 415-residue polypeptide: Stimulator of interferon genes protein (415 aa).

The TIR domain occupies 29-163 (HVYHAFISYC…DIIQAISKPE (135 aa)). Glu104 is an active-site residue. Arg256 contacts 2',3'-cGAMP. Residues 387 to 415 (KSPSSTNMVKSEPNIYREESGKTKSVERG) form a disordered region. The segment covering 401 to 415 (IYREESGKTKSVERG) has biased composition (basic and acidic residues).

In the N-terminal section; belongs to the Toll-like receptor family. The protein in the C-terminal section; belongs to the TMEM173 family. In terms of assembly, homodimer.

It catalyses the reaction NAD(+) + H2O = ADP-D-ribose + nicotinamide + H(+). Its function is as follows. Sensor of cytosolic DNA from bacteria and viruses that promotes autophagy. Binds c-di-AMP, 2'3'-cGAMP, 3'3'-cGAMP and to a lesser extent c-di-GMP. Nucleotide binding has not been seen to stimulate NAD(+) hydrolase activity. In Magallana gigas (Pacific oyster), this protein is Stimulator of interferon genes protein.